A 135-amino-acid polypeptide reads, in one-letter code: Large ribosomal subunit protein uL15 (135 aa).

The tract at residues 21–66 (VGRGQGSGMGKTATRGGKGQTARTGYKAKRGFEGGQQPLQRRLPKI) is disordered.

Belongs to the universal ribosomal protein uL15 family. Part of the 50S ribosomal subunit.

Binds to the 23S rRNA. The polypeptide is Large ribosomal subunit protein uL15 (Helicobacter pylori (strain HPAG1)).